Reading from the N-terminus, the 634-residue chain is Phospholipase B (634 aa).

A signal peptide spans 1–19 (MSIITTAFALSLLATTAFA). Positions 46 to 569 (DCPSNVTWIR…DTWCWAGDDN (524 aa)) constitute a PLA2c domain. Residues asparagine 50, asparagine 56, asparagine 122, asparagine 231, asparagine 246, asparagine 269, asparagine 311, asparagine 340, asparagine 384, asparagine 430, asparagine 478, asparagine 498, asparagine 525, asparagine 550, asparagine 569, asparagine 591, and asparagine 603 are each glycosylated (N-linked (GlcNAc...) asparagine).

Belongs to the lysophospholipase family. Post-translationally, N-glycosylated.

It localises to the secreted. It catalyses the reaction a 1-acyl-sn-glycero-3-phosphocholine + H2O = sn-glycerol 3-phosphocholine + a fatty acid + H(+). In terms of biological role, exhibits phospholipase B (PLB), lysophospholipase (LPL) and lysophospholipase/transacylase (LPTA) activities. In Cryptococcus neoformans var. neoformans serotype D (strain JEC21 / ATCC MYA-565) (Filobasidiella neoformans), this protein is Phospholipase B (PLB1).